The primary structure comprises 157 residues: Pyruvoyl-dependent arginine decarboxylase (157 aa).

S44 carries the post-translational modification Pyruvic acid (Ser).

It belongs to the PdaD family. Pyruvate serves as cofactor.

The catalysed reaction is L-arginine + H(+) = agmatine + CO2. The chain is Pyruvoyl-dependent arginine decarboxylase from Thermococcus kodakarensis (strain ATCC BAA-918 / JCM 12380 / KOD1) (Pyrococcus kodakaraensis (strain KOD1)).